The chain runs to 238 residues: Ribonuclease PH (238 aa).

Phosphate-binding positions include R86 and 124–126 (GTR).

This sequence belongs to the RNase PH family. In terms of assembly, homohexameric ring arranged as a trimer of dimers.

The enzyme catalyses tRNA(n+1) + phosphate = tRNA(n) + a ribonucleoside 5'-diphosphate. Functionally, phosphorolytic 3'-5' exoribonuclease that plays an important role in tRNA 3'-end maturation. Removes nucleotide residues following the 3'-CCA terminus of tRNAs; can also add nucleotides to the ends of RNA molecules by using nucleoside diphosphates as substrates, but this may not be physiologically important. Probably plays a role in initiation of 16S rRNA degradation (leading to ribosome degradation) during starvation. This is Ribonuclease PH from Yersinia pseudotuberculosis serotype O:1b (strain IP 31758).